The following is a 259-amino-acid chain: uncharacterized protein (259 aa).

This is an uncharacterized protein from Schizosaccharomyces pombe (strain 972 / ATCC 24843) (Fission yeast).